Consider the following 66-residue polypeptide: Myrmicitoxin(1)-Pr5a (66 aa).

Residues 1–25 (MRSLYLSFSLTIIFVLVIMHAEAKA) form the signal peptide. The propeptide occupies 26 to 37 (ISEPNAIAEADP). At Val-65 the chain carries Valine amide.

It belongs to the formicidae venom clade 3 family. As to expression, expressed by the venom gland.

The protein resides in the secreted. Toxin that causes a rapid and irreversible paralysis when intrathoracically injected into insects (blowflies). Does not cause spontaneous nocifensive behaviors by intraplantar injection in mice. Exhibits hemolytic and cytotoxic activities on HEK293 cells. The protein is Myrmicitoxin(1)-Pr5a of Pogonomyrmex rugosus (Desert harvester ant).